Here is a 526-residue protein sequence, read N- to C-terminus: piRNA biogenesis factor prde-1 (526 aa).

A disordered region spans residues 436–526; the sequence is EAKEEPIDKK…RRRGCEIRRK (91 aa). Over residues 439–448 the composition is skewed to basic and acidic residues; sequence EEPIDKKKDP. Residues 458–467 show a composition bias toward basic residues; sequence GKKRRGRKPK. Residues 468–487 are compositionally biased toward basic and acidic residues; it reads KKDDPKMELKDEVKDLKDFV. A compositionally biased stretch (low complexity) spans 489-498; the sequence is EESTSASSSA.

Expressed in male and female germ cells.

It is found in the nucleus. The protein resides in the chromosome. Functionally, nuclear factor required for the production of piwi-interacting RNA (piRNA) precursors. Specifically required for piRNAs produced from loci associated with the Ruby motif. Promotes binding of the transcription factor snpc-4 at piRNA genomic clusters. Required for normal fertility. This chain is piRNA biogenesis factor prde-1, found in Caenorhabditis elegans.